Consider the following 233-residue polypeptide: MDAREIIEMIAKAKKKTPIVAYIKGDLAGIDFSSFKFFGDERFGILFGEYEDFKKLLEEHREKIEDYHLEVKARNSALPLADLTKYKARIEPGAIIRDMVEIGEGAVIMMGAVINVGAVIGEGTMIDMNAVVGGRAIIGKKCHIGAGAVIAGVIEPPSAKPVVIEDEVLVGANAVILEGVTVGKGAVVAAGAVVTKDVPPYTVVAGVPARVIKQIDEKTKEKTKIVDELRNLE.

This sequence belongs to the transferase hexapeptide repeat family. DapH subfamily.

It catalyses the reaction (S)-2,3,4,5-tetrahydrodipicolinate + acetyl-CoA + H2O = L-2-acetamido-6-oxoheptanedioate + CoA. Its pathway is amino-acid biosynthesis; L-lysine biosynthesis via DAP pathway; LL-2,6-diaminopimelate from (S)-tetrahydrodipicolinate (acetylase route): step 1/3. In terms of biological role, catalyzes the transfer of an acetyl group from acetyl-CoA to tetrahydrodipicolinate. This Thermotoga sp. (strain RQ2) protein is 2,3,4,5-tetrahydropyridine-2,6-dicarboxylate N-acetyltransferase.